Reading from the N-terminus, the 96-residue chain is UPF0235 protein ECA3630 (96 aa).

The protein belongs to the UPF0235 family.

The protein is UPF0235 protein ECA3630 of Pectobacterium atrosepticum (strain SCRI 1043 / ATCC BAA-672) (Erwinia carotovora subsp. atroseptica).